The chain runs to 552 residues: ATP synthase subunit alpha, mitochondrial (552 aa).

A mitochondrion-targeting transit peptide spans 1–47 (MSIFSARLASSVARNLPKAANQVACKAAYPAASLAARKLHVASTQRS). 211-218 (GDRQTGKT) serves as a coordination point for ATP.

Belongs to the ATPase alpha/beta chains family. F-type ATPases have 2 components, CF(1) - the catalytic core - and CF(0) - the membrane proton channel. CF(1) has five subunits: alpha(3), beta(3), gamma(1), delta(1), epsilon(1). CF(0) has three main subunits: a, b and c.

The protein resides in the mitochondrion inner membrane. In terms of biological role, mitochondrial membrane ATP synthase (F(1)F(0) ATP synthase or Complex V) produces ATP from ADP in the presence of a proton gradient across the membrane which is generated by electron transport complexes of the respiratory chain. F-type ATPases consist of two structural domains, F(1) - containing the extramembraneous catalytic core, and F(0) - containing the membrane proton channel, linked together by a central stalk and a peripheral stalk. During catalysis, ATP synthesis in the catalytic domain of F(1) is coupled via a rotary mechanism of the central stalk subunits to proton translocation. Subunits alpha and beta form the catalytic core in F(1). Rotation of the central stalk against the surrounding alpha(3)beta(3) subunits leads to hydrolysis of ATP in three separate catalytic sites on the beta subunits. Subunit alpha does not bear the catalytic high-affinity ATP-binding sites. This Drosophila melanogaster (Fruit fly) protein is ATP synthase subunit alpha, mitochondrial (blw).